Here is a 71-residue protein sequence, read N- to C-terminus: Large ribosomal subunit protein bL31 (71 aa).

Zn(2+) contacts are provided by Cys16, Cys18, Cys38, and Cys41.

It belongs to the bacterial ribosomal protein bL31 family. Type A subfamily. In terms of assembly, part of the 50S ribosomal subunit. Zn(2+) is required as a cofactor.

Its function is as follows. Binds the 23S rRNA. The chain is Large ribosomal subunit protein bL31 from Francisella tularensis subsp. mediasiatica (strain FSC147).